The chain runs to 143 residues: Nucleoside diphosphate kinase (143 aa).

Residues lysine 11, phenylalanine 59, arginine 87, threonine 93, arginine 104, and asparagine 114 each contribute to the ATP site. Histidine 117 functions as the Pros-phosphohistidine intermediate in the catalytic mechanism.

It belongs to the NDK family. As to quaternary structure, homotetramer. Mg(2+) serves as cofactor.

The protein localises to the cytoplasm. It carries out the reaction a 2'-deoxyribonucleoside 5'-diphosphate + ATP = a 2'-deoxyribonucleoside 5'-triphosphate + ADP. The catalysed reaction is a ribonucleoside 5'-diphosphate + ATP = a ribonucleoside 5'-triphosphate + ADP. Major role in the synthesis of nucleoside triphosphates other than ATP. The ATP gamma phosphate is transferred to the NDP beta phosphate via a ping-pong mechanism, using a phosphorylated active-site intermediate. This Enterobacter sp. (strain 638) protein is Nucleoside diphosphate kinase.